We begin with the raw amino-acid sequence, 150 residues long: Transcriptional repressor NrdR (150 aa).

A zinc finger spans residues Cys3–Cys33. Positions Val48–Lys138 constitute an ATP-cone domain.

Belongs to the NrdR family. Zn(2+) serves as cofactor.

In terms of biological role, negatively regulates transcription of bacterial ribonucleotide reductase nrd genes and operons by binding to NrdR-boxes. The sequence is that of Transcriptional repressor NrdR from Herpetosiphon aurantiacus (strain ATCC 23779 / DSM 785 / 114-95).